A 62-amino-acid chain; its full sequence is Sec-independent protein translocase protein TatA (62 aa).

The helical transmembrane segment at 10-32 threads the bilayer; sequence LLIILIIVIAIFGAGKLAGLGGA.

Belongs to the TatA/E family. Forms a complex with TatC.

The protein localises to the cell membrane. In terms of biological role, part of the twin-arginine translocation (Tat) system that transports large folded proteins containing a characteristic twin-arginine motif in their signal peptide across membranes. TatA could form the protein-conducting channel of the Tat system. The polypeptide is Sec-independent protein translocase protein TatA (Chloroflexus aurantiacus (strain ATCC 29366 / DSM 635 / J-10-fl)).